Reading from the N-terminus, the 221-residue chain is Pre-hexon-linking protein VIII (221 aa).

T65 is subject to Phosphothreonine; by host. A propeptide spanning residues 113–150 (AAPWSGVKTGSFCGRGLQLAEPPTTAIYPSGLFHLGRG) is cleaved from the precursor.

The protein belongs to the adenoviridae hexon-linking protein family. In terms of assembly, interacts with the peripentonal hexons as well as the hexons in the facets. Part of a complex composed of the core-capsid bridging protein, the endosome lysis protein VI and the hexon-linking protein VIII; these interactions bridge the virus core to the capsid. Cleaved by the viral protease during virion maturation. May cause the middle segment to be shed from the capsid.

It is found in the virion. Its subcellular location is the host nucleus. In terms of biological role, structural component of the virion that acts as a cement protein on the capsid interior and which glue the peripentonal hexons and group-of-nine hexons together. The sequence is that of Pre-hexon-linking protein VIII from Sus scrofa (Pig).